Here is a 339-residue protein sequence, read N- to C-terminus: DNA-directed RNA polymerase subunit alpha (339 aa).

Residues 1–233 (MVREEVAGST…DLFLPFLHAE (233 aa)) form an alpha N-terminal domain (alpha-NTD) region. The tract at residues 264-339 (KKGIPLNCIF…IDLLKNKLSF (76 aa)) is alpha C-terminal domain (alpha-CTD).

Belongs to the RNA polymerase alpha chain family. In terms of assembly, in plastids the minimal PEP RNA polymerase catalytic core is composed of four subunits: alpha, beta, beta', and beta''. When a (nuclear-encoded) sigma factor is associated with the core the holoenzyme is formed, which can initiate transcription.

The protein resides in the plastid. The protein localises to the chloroplast. The catalysed reaction is RNA(n) + a ribonucleoside 5'-triphosphate = RNA(n+1) + diphosphate. DNA-dependent RNA polymerase catalyzes the transcription of DNA into RNA using the four ribonucleoside triphosphates as substrates. The protein is DNA-directed RNA polymerase subunit alpha of Festucopsis serpentini.